Consider the following 217-residue polypeptide: Aprataxin-like protein (217 aa).

The 134-residue stretch at 6–139 (ALKNYVTSPE…HIHVISKDFH (134 aa)) folds into the HIT domain. Interaction with DNA stretches follow at residues 34–38 (DSFPK), 121–132 (HSVPSMANLHIH), and 144–148 (KNKKH). Histidine 130 (nucleophile) is an active-site residue. Zn(2+) is bound by residues cysteine 188, cysteine 191, histidine 205, and glutamate 209.

It is found in the nucleus. It localises to the cytoplasm. The catalysed reaction is a 5'-end adenosine-5'-diphospho-5'-2'-deoxyribonucleoside-DNA + H2O = a 5'-end 5'-phospho-2'-deoxyribonucleoside-DNA + AMP + 2 H(+). The enzyme catalyses a 5'-end adenosine-5'-diphospho-5'-ribonucleoside-2'-deoxyribonucleotide-DNA + H2O = a 5'-end 5'-phospho-ribonucleoside-2'-deoxyribonucleotide-DNA + AMP + 2 H(+). It catalyses the reaction a 3'-end 2'-deoxyribonucleotide-3'-diphospho-5'-guanosine-DNA + H2O = a 3'-end 2'-deoxyribonucleotide 3'-phosphate-DNA + GMP + 2 H(+). In terms of biological role, DNA-binding protein involved in single-strand DNA break repair, double-strand DNA break repair and base excision repair. Resolves abortive DNA ligation intermediates formed either at base excision sites, or when DNA ligases attempt to repair non-ligatable breaks induced by reactive oxygen species. Catalyzes the release of adenylate groups covalently linked to 5'-phosphate termini, resulting in the production of 5'-phosphate termini that can be efficiently rejoined. Likewise, catalyzes the release of 3'-linked guanosine (DNAppG) and inosine (DNAppI) from DNA, but has higher specific activity with 5'-linked adenosine (AppDNA). In Saccharomyces cerevisiae (strain ATCC 204508 / S288c) (Baker's yeast), this protein is Aprataxin-like protein (HNT3).